The primary structure comprises 110 residues: Nucleoid-associated protein YpAngola_A2890 (110 aa).

The interval 90 to 110 (KEKMASVSNGMQLPPGFKMPF) is disordered.

The protein belongs to the YbaB/EbfC family. In terms of assembly, homodimer.

It localises to the cytoplasm. Its subcellular location is the nucleoid. In terms of biological role, binds to DNA and alters its conformation. May be involved in regulation of gene expression, nucleoid organization and DNA protection. This chain is Nucleoid-associated protein YpAngola_A2890, found in Yersinia pestis bv. Antiqua (strain Angola).